The sequence spans 445 residues: Tubulin beta-9 chain (445 aa).

Residues Gln11, Glu69, Ser138, Gly142, Thr143, Gly144, Asn204, and Asn226 each contribute to the GTP site. Glu69 lines the Mg(2+) pocket. The interval 423–445 (QQYQDATADDEEYEEEEEYEAEA) is disordered. Over residues 429–445 (TADDEEYEEEEEYEAEA) the composition is skewed to acidic residues.

It belongs to the tubulin family. As to quaternary structure, dimer of alpha and beta chains. A typical microtubule is a hollow water-filled tube with an outer diameter of 25 nm and an inner diameter of 15 nM. Alpha-beta heterodimers associate head-to-tail to form protofilaments running lengthwise along the microtubule wall with the beta-tubulin subunit facing the microtubule plus end conferring a structural polarity. Microtubules usually have 13 protofilaments but different protofilament numbers can be found in some organisms and specialized cells. Mg(2+) serves as cofactor.

The protein resides in the cytoplasm. The protein localises to the cytoskeleton. Tubulin is the major constituent of microtubules, a cylinder consisting of laterally associated linear protofilaments composed of alpha- and beta-tubulin heterodimers. Microtubules grow by the addition of GTP-tubulin dimers to the microtubule end, where a stabilizing cap forms. Below the cap, tubulin dimers are in GDP-bound state, owing to GTPase activity of alpha-tubulin. This is Tubulin beta-9 chain from Gossypium hirsutum (Upland cotton).